The primary structure comprises 128 residues: Glycine cleavage system H protein (128 aa).

Residues 22 to 104 form the Lipoyl-binding domain; sequence TALVGVTDYA…YASGWLVKIK (83 aa). Lys-63 is subject to N6-lipoyllysine.

This sequence belongs to the GcvH family. As to quaternary structure, the glycine cleavage system is composed of four proteins: P, T, L and H. (R)-lipoate is required as a cofactor.

The glycine cleavage system catalyzes the degradation of glycine. The H protein shuttles the methylamine group of glycine from the P protein to the T protein. The polypeptide is Glycine cleavage system H protein (Halothermothrix orenii (strain H 168 / OCM 544 / DSM 9562)).